Consider the following 411-residue polypeptide: Alpha-1-antitrypsin 1-6 (411 aa).

The first 25 residues, 1–25, serve as a signal peptide directing secretion; the sequence is MTTPFSSHGLLLLVGLCCLLLITKT. N-linked (GlcNAc...) asparagine glycans are attached at residues N50, N89, N101, and N164.

The protein belongs to the serpin family. In terms of tissue distribution, expressed predominantly in epididymis where it is found in the epithelial cells of the caput, corpus and cauda epididymis.

It localises to the secreted. Inhibitor of serine proteases. This Mus musculus (Mouse) protein is Alpha-1-antitrypsin 1-6.